Reading from the N-terminus, the 444-residue chain is Trigger factor (444 aa).

Residues glycine 185–phenylalanine 270 form the PPIase FKBP-type domain.

This sequence belongs to the FKBP-type PPIase family. Tig subfamily.

It is found in the cytoplasm. It catalyses the reaction [protein]-peptidylproline (omega=180) = [protein]-peptidylproline (omega=0). Functionally, involved in protein export. Acts as a chaperone by maintaining the newly synthesized protein in an open conformation. Functions as a peptidyl-prolyl cis-trans isomerase. The protein is Trigger factor of Wolbachia pipientis wMel.